Consider the following 29-residue polypeptide: Cyclotide vibi-A (29 aa).

Positions 1–29 (GLPVCGETCFGGTCNTPGCSCSYPICTRN) form a cross-link, cyclopeptide (Gly-Asn). 3 cysteine pairs are disulfide-bonded: cysteine 5–cysteine 19, cysteine 9–cysteine 21, and cysteine 14–cysteine 26.

In terms of processing, this is a cyclic peptide.

Functionally, probably participates in a plant defense mechanism. In Viola biflora (Yellow wood violet), this protein is Cyclotide vibi-A.